The chain runs to 154 residues: SsrA-binding protein (154 aa).

Positions Lys-130 to Ala-154 are disordered. The span at Asp-133 to Ala-154 shows a compositional bias: basic and acidic residues.

This sequence belongs to the SmpB family.

It localises to the cytoplasm. Its function is as follows. Required for rescue of stalled ribosomes mediated by trans-translation. Binds to transfer-messenger RNA (tmRNA), required for stable association of tmRNA with ribosomes. tmRNA and SmpB together mimic tRNA shape, replacing the anticodon stem-loop with SmpB. tmRNA is encoded by the ssrA gene; the 2 termini fold to resemble tRNA(Ala) and it encodes a 'tag peptide', a short internal open reading frame. During trans-translation Ala-aminoacylated tmRNA acts like a tRNA, entering the A-site of stalled ribosomes, displacing the stalled mRNA. The ribosome then switches to translate the ORF on the tmRNA; the nascent peptide is terminated with the 'tag peptide' encoded by the tmRNA and targeted for degradation. The ribosome is freed to recommence translation, which seems to be the essential function of trans-translation. The sequence is that of SsrA-binding protein from Synechococcus elongatus (strain ATCC 33912 / PCC 7942 / FACHB-805) (Anacystis nidulans R2).